Here is a 374-residue protein sequence, read N- to C-terminus: DNA/RNA-binding protein ALBA4 (374 aa).

It belongs to the histone-like Alba family.

The protein resides in the cytoplasm. It is found in the cell cortex. The protein localises to the perinuclear region. Functionally, possesses DNA- and RNA-binding activities. Binds to DNA with relaxed sequence specificity. May associate with the subtelomeric TARE6 repeats. Regulates the abundance of transcript sub-populations in a stage-specific manner. Regulates activation of male gametocytes. Participates in the coordination of sporozoite development in the oocyst. This chain is DNA/RNA-binding protein ALBA4, found in Plasmodium yoelii yoelii.